The chain runs to 361 residues: Rhomboid domain-containing protein 2 (361 aa).

5 helical membrane passes run 19–39, 63–83, 100–120, 158–178, and 182–202; these read SATF…LFLL, LVTY…AIII, CFFT…FESV, FGVV…SWLI, and SFLS…TYCY. Disordered regions lie at residues 265–287 and 318–361; these read PSYP…PPGH and PASA…VAMP. Polar residues-rich tracts occupy residues 267–276 and 318–328; these read YPVTQMQHAS and PASAGTSQGVQ.

Belongs to the peptidase S54 family. Might form homotrimers; these trimers are only formed in retina. As to expression, widely expressed, including in retina and brain (at protein level), as well as in kidney, testis and ovary. Expressed in all layers of the retina, including inner segments of photoreceptor cells and ganglion cells (at protein level).

It localises to the golgi apparatus. It is found in the cis-Golgi network membrane. The polypeptide is Rhomboid domain-containing protein 2 (Rhbdd2) (Mus musculus (Mouse)).